Here is a 93-residue protein sequence, read N- to C-terminus: UPF0358 protein BPUM_1375 (93 aa).

The protein belongs to the UPF0358 family.

This chain is UPF0358 protein BPUM_1375, found in Bacillus pumilus (strain SAFR-032).